The chain runs to 276 residues: 4-deoxy-L-threo-5-hexosulose-uronate ketol-isomerase (276 aa).

Residues H194, H196, E201, and H243 each coordinate Zn(2+).

This sequence belongs to the KduI family. It depends on Zn(2+) as a cofactor.

The catalysed reaction is 5-dehydro-4-deoxy-D-glucuronate = 3-deoxy-D-glycero-2,5-hexodiulosonate. The protein operates within glycan metabolism; pectin degradation; 2-dehydro-3-deoxy-D-gluconate from pectin: step 4/5. Its function is as follows. Catalyzes the isomerization of 5-dehydro-4-deoxy-D-glucuronate to 3-deoxy-D-glycero-2,5-hexodiulosonate. This chain is 4-deoxy-L-threo-5-hexosulose-uronate ketol-isomerase, found in Halalkalibacterium halodurans (strain ATCC BAA-125 / DSM 18197 / FERM 7344 / JCM 9153 / C-125) (Bacillus halodurans).